The primary structure comprises 275 residues: Spermidine/putrescine transport system permease protein PotB (275 aa).

A helical transmembrane segment spans residues 1-21 (MIVTIVGWLVLFVFLPNLMII). The Periplasmic segment spans residues 22–60 (GTSFLTRDDASFVKMVFTLDNYTRLLDPLYFEVLLHSLN). An ABC transmembrane type-1 domain is found at 55 to 261 (LLHSLNMALI…IVMGLMLLVY (207 aa)). A helical membrane pass occupies residues 61-81 (MALIATLACLVLGYPFAWFLA). Topologically, residues 82–89 (KLPHKVRP) are cytoplasmic. The helical transmembrane segment at 90–110 (LLLFLLIVPFWTNSLIRIYGL) threads the bilayer. Residues 111–135 (KIFLSTKGYLNEFLLWLGVIDTPIR) lie on the Periplasmic side of the membrane. The chain crosses the membrane as a helical span at residues 136 to 156 (IMFTPSAVIIGLVYILLPFMV). At 157–187 (MPLYSSIEKLDKPLLEAARDLGASKLQTFIR) the chain is on the cytoplasmic side. A helical membrane pass occupies residues 188-208 (IIIPLTMPGIIAGCLLVMLPA). Residues 209 to 241 (MGLFYVSDLMGGAKNLLIGNVIKVQFLNIRDWP) are Periplasmic-facing. A helical transmembrane segment spans residues 242–262 (FGAATSITLTIVMGLMLLVYW). At 263–275 (RASRLLNKKVELE) the chain is on the cytoplasmic side.

The protein belongs to the binding-protein-dependent transport system permease family. CysTW subfamily.

Its subcellular location is the cell inner membrane. In terms of biological role, required for the activity of the bacterial periplasmic transport system of putrescine and spermidine. In Escherichia coli (strain K12), this protein is Spermidine/putrescine transport system permease protein PotB (potB).